The chain runs to 277 residues: Large ribosomal subunit protein uL2 (277 aa).

The tract at residues 219–277 (TVRGSVMNPNDHPHGGGEGKAPVGRKAPSTPWGKPALGLKTRNKKAKSDKLIVRRRNEK) is disordered. Basic and acidic residues predominate over residues 264-277 (AKSDKLIVRRRNEK).

The protein belongs to the universal ribosomal protein uL2 family. Part of the 50S ribosomal subunit. Forms a bridge to the 30S subunit in the 70S ribosome.

In terms of biological role, one of the primary rRNA binding proteins. Required for association of the 30S and 50S subunits to form the 70S ribosome, for tRNA binding and peptide bond formation. It has been suggested to have peptidyltransferase activity; this is somewhat controversial. Makes several contacts with the 16S rRNA in the 70S ribosome. This is Large ribosomal subunit protein uL2 from Streptococcus sanguinis (strain SK36).